Reading from the N-terminus, the 177-residue chain is Large ribosomal subunit protein uL6 (177 aa).

This sequence belongs to the universal ribosomal protein uL6 family. Part of the 50S ribosomal subunit.

Functionally, this protein binds to the 23S rRNA, and is important in its secondary structure. It is located near the subunit interface in the base of the L7/L12 stalk, and near the tRNA binding site of the peptidyltransferase center. The polypeptide is Large ribosomal subunit protein uL6 (Rickettsia felis (strain ATCC VR-1525 / URRWXCal2) (Rickettsia azadi)).